A 254-amino-acid polypeptide reads, in one-letter code: D-aminoacyl-tRNA deacylase (254 aa).

A disordered region spans residues 61-82 (KPTLTVHTPGNLTDDNSHGGNP). Positions 65-74 (TVHTPGNLTD) are enriched in polar residues.

The protein belongs to the DtdA deacylase family. Monomer. Zn(2+) is required as a cofactor.

The enzyme catalyses a D-aminoacyl-tRNA + H2O = a tRNA + a D-alpha-amino acid + H(+). It catalyses the reaction glycyl-tRNA(Ala) + H2O = tRNA(Ala) + glycine + H(+). D-aminoacyl-tRNA deacylase with broad substrate specificity. By recycling D-aminoacyl-tRNA to D-amino acids and free tRNA molecules, this enzyme counteracts the toxicity associated with the formation of D-aminoacyl-tRNA entities in vivo. This is D-aminoacyl-tRNA deacylase from Methanococcus maripaludis (strain DSM 14266 / JCM 13030 / NBRC 101832 / S2 / LL).